The following is a 110-amino-acid chain: Large ribosomal subunit protein uL22 (110 aa).

This sequence belongs to the universal ribosomal protein uL22 family. In terms of assembly, part of the 50S ribosomal subunit.

This protein binds specifically to 23S rRNA; its binding is stimulated by other ribosomal proteins, e.g. L4, L17, and L20. It is important during the early stages of 50S assembly. It makes multiple contacts with different domains of the 23S rRNA in the assembled 50S subunit and ribosome. Functionally, the globular domain of the protein is located near the polypeptide exit tunnel on the outside of the subunit, while an extended beta-hairpin is found that lines the wall of the exit tunnel in the center of the 70S ribosome. The protein is Large ribosomal subunit protein uL22 of Desulfotalea psychrophila (strain LSv54 / DSM 12343).